Here is a 369-residue protein sequence, read N- to C-terminus: Septin-5 (369 aa).

Phosphothreonine is present on T13. The Septin-type G domain maps to 41–314 (KGFDFTLMVA…ENYRAHCIQQ (274 aa)). The interval 51–58 (GESGLGKS) is G1 motif. GTP-binding positions include 51–58 (GESGLGKS), T85, and G111. Positions 108–111 (DTPG) are G3 motif. R168 bears the Omega-N-methylarginine mark. The segment at 189-192 (AKAD) is G4 motif. Residue 190-198 (KADCLVPSE) participates in GTP binding. S225 bears the Phosphoserine mark. GTP contacts are provided by G248 and R263. S327 carries the post-translational modification Phosphoserine. T336 is subject to Phosphothreonine. The stretch at 338-369 (DAETEKLIRMKDEELRRMQEMLQRMKQQMQDQ) forms a coiled coil.

The protein belongs to the TRAFAC class TrmE-Era-EngA-EngB-Septin-like GTPase superfamily. Septin GTPase family. As to quaternary structure, septins polymerize into heterooligomeric protein complexes that form filaments, and can associate with cellular membranes, actin filaments and microtubules. GTPase activity is required for filament formation. Interacts with SEPTIN2 and SEPTIN5. In platelets, associated with a complex containing STX4. Interacts with PRKN; this interaction leads to SEPTIN5 ubiquitination and degradation. Interacts with DYRK1A. Interacts with STX1A; in the cerebellar cortex. Post-translationally, phosphorylated by DYRK1A. In platelets, phosphorylated in response to thrombin, phorbol-12-myristate-13-acetate and collagen. As to expression, expressed at high levels in the CNS, as well as in heart and platelets (at protein level).

It is found in the cytoplasm. It localises to the cytoskeleton. Functionally, filament-forming cytoskeletal GTPase. May play a role in cytokinesis (Potential). May play a role in platelet secretion. In Homo sapiens (Human), this protein is Septin-5.